The following is a 216-amino-acid chain: PEP-dependent dihydroxyacetone kinase 2, ADP-binding subunit DhaL (216 aa).

The DhaL domain maps to 9-210 (AFFGHVLQDM…SWMLMNVILE (202 aa)). Mg(2+) is bound by residues Asp-33, Asp-38, and Asp-40. ADP is bound by residues 41–44 (HGIN), 84–85 (AS), Gly-126, Met-135, Arg-182, and 195–197 (DPG).

In terms of assembly, homodimer. The dihydroxyacetone kinase complex is composed of a homodimer of DhaM, a homodimer of DhaK and the subunit DhaL. It depends on Mg(2+) as a cofactor.

The protein localises to the cytoplasm. The catalysed reaction is dihydroxyacetone + phosphoenolpyruvate = dihydroxyacetone phosphate + pyruvate. The protein operates within polyol metabolism; glycerol degradation. In terms of biological role, ADP-binding subunit of the dihydroxyacetone kinase, which is responsible for the phosphoenolpyruvate (PEP)-dependent phosphorylation of dihydroxyacetone. DhaL-ADP is converted to DhaL-ATP via a phosphoryl group transfer from DhaM and transmits it to dihydroxyacetone binds to DhaK. The protein is PEP-dependent dihydroxyacetone kinase 2, ADP-binding subunit DhaL of Listeria innocua serovar 6a (strain ATCC BAA-680 / CLIP 11262).